Here is a 209-residue protein sequence, read N- to C-terminus: N-(5'-phosphoribosyl)anthranilate isomerase (209 aa).

This sequence belongs to the TrpF family.

It catalyses the reaction N-(5-phospho-beta-D-ribosyl)anthranilate = 1-(2-carboxyphenylamino)-1-deoxy-D-ribulose 5-phosphate. The protein operates within amino-acid biosynthesis; L-tryptophan biosynthesis; L-tryptophan from chorismate: step 3/5. The polypeptide is N-(5'-phosphoribosyl)anthranilate isomerase (Staphylococcus carnosus (strain TM300)).